We begin with the raw amino-acid sequence, 245 residues long: Thiopurine S-methyltransferase (245 aa).

Tryptophan 29 to phenylalanine 40 is an S-adenosyl-L-methionine binding site. Residue phenylalanine 40 coordinates substrate. Lysine 58 bears the N6-acetyllysine mark. 3 residues coordinate S-adenosyl-L-methionine: leucine 69, glutamate 90, and arginine 152.

This sequence belongs to the class I-like SAM-binding methyltransferase superfamily. TPMT family. As to quaternary structure, monomer.

It localises to the cytoplasm. The catalysed reaction is S-adenosyl-L-methionine + a thiopurine = S-adenosyl-L-homocysteine + a thiopurine S-methylether.. This is Thiopurine S-methyltransferase (TPMT) from Lycaon pictus (African wild dog).